A 351-amino-acid polypeptide reads, in one-letter code: Chorismate synthase (351 aa).

The disordered stretch occupies residues 39–60; that stretch reads EDIQRDLERRRPGKRLTSPRGE. Arg48 and Arg53 together coordinate NADP(+). FMN-binding positions include 124 to 126, Ala276, 291 to 295, and Arg317; these read RSS and KPIPS.

This sequence belongs to the chorismate synthase family. As to quaternary structure, homotetramer. FMNH2 is required as a cofactor.

The catalysed reaction is 5-O-(1-carboxyvinyl)-3-phosphoshikimate = chorismate + phosphate. Its pathway is metabolic intermediate biosynthesis; chorismate biosynthesis; chorismate from D-erythrose 4-phosphate and phosphoenolpyruvate: step 7/7. In terms of biological role, catalyzes the anti-1,4-elimination of the C-3 phosphate and the C-6 proR hydrogen from 5-enolpyruvylshikimate-3-phosphate (EPSP) to yield chorismate, which is the branch point compound that serves as the starting substrate for the three terminal pathways of aromatic amino acid biosynthesis. This reaction introduces a second double bond into the aromatic ring system. This chain is Chorismate synthase, found in Syntrophobacter fumaroxidans (strain DSM 10017 / MPOB).